A 641-amino-acid polypeptide reads, in one-letter code: Probable potassium transport system protein Kup (641 aa).

The segment covering 1–14 (MALDSESSASNRQG) has biased composition (polar residues). Positions 1–20 (MALDSESSASNRQGSRNEQD) are disordered. The next 12 helical transmembrane spans lie at 29-49 (LCLT…LYAF), 69-89 (ILSL…LLII), 120-140 (VLIV…MITP), 156-176 (PQLT…LFMV), 188-208 (FGPI…NGII), 236-256 (VLGG…DMGH), 267-287 (FALV…LLLL), 307-327 (LVGL…SGVF), 355-375 (VYVP…VLHF), 384-404 (AFGI…FFVM), 410-430 (WNIL…LAFF), and 437-457 (ITDG…LMIT).

It belongs to the HAK/KUP transporter (TC 2.A.72) family.

It is found in the cell inner membrane. The enzyme catalyses K(+)(in) + H(+)(in) = K(+)(out) + H(+)(out). Transport of potassium into the cell. Likely operates as a K(+):H(+) symporter. The chain is Probable potassium transport system protein Kup from Nitrosomonas eutropha (strain DSM 101675 / C91 / Nm57).